The primary structure comprises 166 residues: Prorelaxin H2 (166 aa).

An N-terminal signal peptide occupies residues S1–A5. Disulfide bonds link C16/C153, C28/C166, and C152/C157. Residues S37 to S138 constitute a propeptide, connecting peptide.

Belongs to the insulin family. Heterodimer of a B chain and an A chain linked by two disulfide bonds. In terms of tissue distribution, expressed in the corpus luteum of pregnancy and in the placenta.

The protein localises to the secreted. Its function is as follows. Relaxin is an ovarian hormone that acts with estrogen to produce dilatation of the birth canal in many mammals. May be involved in remodeling of connective tissues during pregnancy, promoting growth of pubic ligaments and ripening of the cervix. The polypeptide is Prorelaxin H2 (RNL2) (Pan troglodytes (Chimpanzee)).